Consider the following 234-residue polypeptide: UPF0173 metal-dependent hydrolase Smed_0942 (234 aa).

It belongs to the UPF0173 family.

The protein is UPF0173 metal-dependent hydrolase Smed_0942 of Sinorhizobium medicae (strain WSM419) (Ensifer medicae).